A 502-amino-acid chain; its full sequence is CBL-interacting protein kinase 11 (502 aa).

The region spanning 12-267 is the Protein kinase domain; it reads YEVGKQLGQG…IPRIKRSTWY (256 aa). ATP-binding positions include 18-26 and Lys41; that span reads LGQGTFAKV. The active-site Proton acceptor is the Asp135. The segment at 153–182 is activation loop; that stretch reads DFGLSALAESKRQDGLLHTTCGTPAYVAPE. The 37-residue stretch at 297 to 333 folds into the NAF domain; the sequence is AECSTSEENQGSLSLPNLNAFDIISLSTGFNLSGFFE. The segment at 339 to 367 is PPI; it reads QEERFTTRQPVTTVLGKLKELAKRLKLKV. A disordered region spans residues 447–502; it reads LQGEQQQSPLPPELPQDQLQPSLPQQEKQDMPEPPLLPQVPQEEVQTSIPAEQTKN. The segment covering 461–472 has biased composition (low complexity); it reads PQDQLQPSLPQQ. Residues 493 to 502 are compositionally biased toward polar residues; that stretch reads TSIPAEQTKN.

The protein belongs to the protein kinase superfamily. CAMK Ser/Thr protein kinase family. SNF1 subfamily. Mn(2+) serves as cofactor.

It catalyses the reaction L-seryl-[protein] + ATP = O-phospho-L-seryl-[protein] + ADP + H(+). It carries out the reaction L-threonyl-[protein] + ATP = O-phospho-L-threonyl-[protein] + ADP + H(+). Functionally, CIPK serine-threonine protein kinases interact with CBL proteins. Binding of a CBL protein to the regulatory NAF domain of CIPK protein lead to the activation of the kinase in a calcium-dependent manner. The sequence is that of CBL-interacting protein kinase 11 (CIPK11) from Oryza sativa subsp. japonica (Rice).